The primary structure comprises 214 residues: Cytochrome b (214 aa).

Helical transmembrane passes span 31 to 51, 75 to 96, 111 to 131, and 176 to 196; these read FGSM…FLAI, WIMQ…YTHI, WLSG…GYVL, and FFAL…IHIL. Heme b contacts are provided by His-81 and His-95. Heme b-binding residues include His-180 and His-194. Position 199 (His-199) interacts with a ubiquinone.

Belongs to the cytochrome b family. In terms of assembly, the cytochrome bc1 complex contains 3 respiratory subunits (MT-CYB, CYC1 and UQCRFS1), 2 core proteins (UQCRC1 and UQCRC2) and probably 6 low-molecular weight proteins. Heme b serves as cofactor.

It localises to the mitochondrion inner membrane. Its function is as follows. Component of the ubiquinol-cytochrome c reductase complex (complex III or cytochrome b-c1 complex) that is part of the mitochondrial respiratory chain. The b-c1 complex mediates electron transfer from ubiquinol to cytochrome c. Contributes to the generation of a proton gradient across the mitochondrial membrane that is then used for ATP synthesis. This chain is Cytochrome b (MT-CYB), found in Lachesis muta muta (Bushmaster).